The following is a 56-amino-acid chain: Large ribosomal subunit protein bL32 (56 aa).

Positions 1–16 are enriched in basic residues; sequence MAVQKNKKSRSKRGMR. The interval 1–36 is disordered; it reads MAVQKNKKSRSKRGMRRSHDSLSTPQLSVDSTSGEL. Polar residues predominate over residues 21–34; sequence SLSTPQLSVDSTSG.

Belongs to the bacterial ribosomal protein bL32 family.

The sequence is that of Large ribosomal subunit protein bL32 from Shewanella sediminis (strain HAW-EB3).